We begin with the raw amino-acid sequence, 125 residues long: Actin, alpha skeletal muscle (125 aa).

It belongs to the actin family. As to quaternary structure, polymerization of globular actin (G-actin) leads to a structural filament (F-actin) in the form of a two-stranded helix. Each actin can bind to 4 others. In terms of processing, methylated at His-75 by SETD3.

It is found in the cytoplasm. Its subcellular location is the cytoskeleton. Functionally, actins are highly conserved proteins that are involved in various types of cell motility and are ubiquitously expressed in all eukaryotic cells. The sequence is that of Actin, alpha skeletal muscle from Pleurodeles waltl (Iberian ribbed newt).